An 888-amino-acid polypeptide reads, in one-letter code: Aconitate hydratase A (888 aa).

Residues C433, C499, and C502 each coordinate [4Fe-4S] cluster.

Belongs to the aconitase/IPM isomerase family. As to quaternary structure, monomer. [4Fe-4S] cluster serves as cofactor.

It carries out the reaction citrate = D-threo-isocitrate. The catalysed reaction is (2S,3R)-3-hydroxybutane-1,2,3-tricarboxylate = 2-methyl-cis-aconitate + H2O. It functions in the pathway carbohydrate metabolism; tricarboxylic acid cycle; isocitrate from oxaloacetate: step 2/2. It participates in organic acid metabolism; propanoate degradation. Its function is as follows. Involved in the catabolism of short chain fatty acids (SCFA) via the tricarboxylic acid (TCA)(acetyl degradation route) and probably the 2-methylcitrate cycle I (propionate degradation route). Catalyzes the reversible isomerization of citrate to isocitrate via cis-aconitate. Could catalyze the hydration of 2-methyl-cis-aconitate to yield (2R,3S)-2-methylisocitrate. The apo form of AcnA functions as a RNA-binding regulatory protein. This is Aconitate hydratase A (acn) from Streptococcus mutans serotype c (strain ATCC 700610 / UA159).